The following is a 204-amino-acid chain: Probable proteasome subunit beta type-3 (204 aa).

It belongs to the peptidase T1B family. As to quaternary structure, the 26S proteasome consists of a 20S proteasome core and two 19S regulatory subunits. The 20S proteasome core is composed of 28 subunits that are arranged in four stacked rings, resulting in a barrel-shaped structure. The two end rings are each formed by seven alpha subunits, and the two central rings are each formed by seven beta subunits. The catalytic chamber with the active sites is on the inside of the barrel.

The protein localises to the cytoplasm. The protein resides in the nucleus. Non-catalytic component of the proteasome, a multicatalytic proteinase complex which is characterized by its ability to cleave peptides with Arg, Phe, Tyr, Leu, and Glu adjacent to the leaving group at neutral or slightly basic pH. The proteasome has an ATP-dependent proteolytic activity. The sequence is that of Probable proteasome subunit beta type-3 (pup3) from Schizosaccharomyces pombe (strain 972 / ATCC 24843) (Fission yeast).